Consider the following 555-residue polypeptide: Prespore protein Dp87 (555 aa).

The signal sequence occupies residues 1–22 (MRILYLASLLFLITLYLSPTFG). The DSCP-N domain occupies 27–144 (RDCESHRSEY…RIPRCVGHHG (118 aa)). Asn-103 carries N-linked (GlcNAc...) asparagine glycosylation. Follistatin-like domains lie at 148–170 (KCDR…ACCV), 175–197 (GCGN…CRCV), 209–231 (QCRN…ATCV), 240–262 (LCRG…PVCV), 276–298 (ICGS…PTCI), 304–327 (LCNQ…VKCS), 332–354 (ECKW…PHCL), and 362–384 (LCKV…PTCI). Asn-306 is a glycosylation site (N-linked (GlcNAc...) asparagine). A glycan (N-linked (GlcNAc...) asparagine) is linked at Asn-418. The segment at 454 to 555 (TTSATTAGTT…ESSESSSATS (102 aa)) is disordered. Over residues 470-555 (GGSTSDSSAA…ESSESSSATS (86 aa)) the composition is skewed to low complexity.

It localises to the spore wall. The chain is Prespore protein Dp87 (cotD) from Dictyostelium discoideum (Social amoeba).